We begin with the raw amino-acid sequence, 240 residues long: MDHENPIVHDIFGIPGANLNLSNLMMTFIVCLIVFVFCVWGSRKLQMKPKGIQNFMEWAVEFVRGIIQDNMDWKTGRIFLPLGLTLIFYILVSNLIGVATVGVVEHDLWWKSPTADAVMTLTLSTMIIALTHYYGIKLRGTKAYLKTYVSPVPLMLPFKIVEEFTNTLTLGLRLFGNIYAGEILLSLLVGLATTSIFGFFGAALPMLAWQTFSVFIGAIQSYVFVMLTMVYMSHKVSSDH.

Transmembrane regions (helical) follow at residues 21–41 (LSNL…CVWG), 78–98 (IFLP…LIGV), 116–136 (DAVM…YYGI), 183–203 (ILLS…FGAA), and 212–232 (FSVF…MVYM).

This sequence belongs to the ATPase A chain family. F-type ATPases have 2 components, CF(1) - the catalytic core - and CF(0) - the membrane proton channel. CF(1) has five subunits: alpha(3), beta(3), gamma(1), delta(1), epsilon(1). CF(0) has three main subunits: a(1), b(2) and c(9-12). The alpha and beta chains form an alternating ring which encloses part of the gamma chain. CF(1) is attached to CF(0) by a central stalk formed by the gamma and epsilon chains, while a peripheral stalk is formed by the delta and b chains.

Its subcellular location is the cell membrane. Key component of the proton channel; it plays a direct role in the translocation of protons across the membrane. The protein is ATP synthase subunit a of Oceanobacillus iheyensis (strain DSM 14371 / CIP 107618 / JCM 11309 / KCTC 3954 / HTE831).